A 942-amino-acid chain; its full sequence is Cilia- and flagella-associated protein 69 (942 aa).

Residues 1-16 (MSTAEASATTADAAEA) are compositionally biased toward low complexity. The segment at 1-25 (MSTAEASATTADAAEAGGRTKTGSP) is disordered.

In terms of tissue distribution, expressed in ciliated olfactory sensory neurons (at protein level). Expressed in testis, specifically in sperm (at protein level).

The protein resides in the cell projection. The protein localises to the cilium. Its subcellular location is the flagellum. In terms of biological role, cilium- and flagellum-associated protein. In the olfactory epithelium, regulates the speed of activation and termination of the odor response and thus contributes to the robustness of olfactory transduction pathways. Required for sperm flagellum assembly and stability. In Mus musculus (Mouse), this protein is Cilia- and flagella-associated protein 69.